Consider the following 222-residue polypeptide: Superoxide dismutase [Mn], mitochondrial (222 aa).

The transit peptide at 1–24 directs the protein to the mitochondrion; the sequence is MLSRGVCGTSRQLAPALGYLGSRQ. His50 is a Mn(2+) binding site. Tyr58 bears the 3'-nitrotyrosine mark. Residues Lys68 and Lys75 each carry the N6-acetyllysine; alternate modification. Residues Lys68 and Lys75 each carry the N6-succinyllysine; alternate modification. His98 is a binding site for Mn(2+). Lys114 is subject to N6-acetyllysine. N6-acetyllysine; alternate is present on residues Lys122 and Lys130. Residues Lys122 and Lys130 each carry the N6-succinyllysine; alternate modification. Mn(2+) contacts are provided by Asp183 and His187. Lys202 is modified (N6-acetyllysine).

The protein belongs to the iron/manganese superoxide dismutase family. In terms of assembly, homotetramer. The cofactor is Mn(2+). Nitrated under oxidative stress. Nitration coupled with oxidation inhibits the catalytic activity. In terms of processing, acetylation at Lys-122 decreases enzymatic activity. Deacetylated by SIRT3 upon exposure to ionizing radiations or after long fasting. Post-translationally, polyubiquitinated; leading to proteasomal degradation. Deubiquitinated by USP36 which increases protein stability.

The protein localises to the mitochondrion matrix. The catalysed reaction is 2 superoxide + 2 H(+) = H2O2 + O2. In terms of biological role, destroys superoxide anion radicals which are normally produced within the cells and which are toxic to biological systems. The sequence is that of Superoxide dismutase [Mn], mitochondrial (SOD2) from Pongo pygmaeus (Bornean orangutan).